The following is a 159-amino-acid chain: Endoribonuclease YbeY (159 aa).

Residues His-125, His-129, and His-135 each contribute to the Zn(2+) site.

Belongs to the endoribonuclease YbeY family. It depends on Zn(2+) as a cofactor.

It is found in the cytoplasm. Its function is as follows. Single strand-specific metallo-endoribonuclease involved in late-stage 70S ribosome quality control and in maturation of the 3' terminus of the 16S rRNA. In Thermoanaerobacter pseudethanolicus (strain ATCC 33223 / 39E) (Clostridium thermohydrosulfuricum), this protein is Endoribonuclease YbeY.